Reading from the N-terminus, the 352-residue chain is Holliday junction branch migration complex subunit RuvB (352 aa).

The tract at residues 1–42 is disordered; it reads MAIVSSSAGRADSQPPAAKSRVVDASPLPEEASPAREDGLRP. The tract at residues 13–201 is large ATPase domain (RuvB-L); it reads SQPPAAKSRV…FGLIQRLEFY (189 aa). Positions 33–42 are enriched in basic and acidic residues; it reads SPAREDGLRP. Leu40, Arg41, Gly82, Lys85, Thr86, Thr87, Arg191, Tyr201, and Arg238 together coordinate ATP. Thr86 is a Mg(2+) binding site. The small ATPAse domain (RuvB-S) stretch occupies residues 202–273; sequence GLEDLQAIVE…LVDEALTLHR (72 aa). Residues 276-352 are head domain (RuvB-H); that stretch reads ARGLDASDRR…RRHLGWPELP (77 aa). DNA contacts are provided by Arg331 and Arg336.

The protein belongs to the RuvB family. Homohexamer. Forms an RuvA(8)-RuvB(12)-Holliday junction (HJ) complex. HJ DNA is sandwiched between 2 RuvA tetramers; dsDNA enters through RuvA and exits via RuvB. An RuvB hexamer assembles on each DNA strand where it exits the tetramer. Each RuvB hexamer is contacted by two RuvA subunits (via domain III) on 2 adjacent RuvB subunits; this complex drives branch migration. In the full resolvosome a probable DNA-RuvA(4)-RuvB(12)-RuvC(2) complex forms which resolves the HJ.

It localises to the cytoplasm. It carries out the reaction ATP + H2O = ADP + phosphate + H(+). Functionally, the RuvA-RuvB-RuvC complex processes Holliday junction (HJ) DNA during genetic recombination and DNA repair, while the RuvA-RuvB complex plays an important role in the rescue of blocked DNA replication forks via replication fork reversal (RFR). RuvA specifically binds to HJ cruciform DNA, conferring on it an open structure. The RuvB hexamer acts as an ATP-dependent pump, pulling dsDNA into and through the RuvAB complex. RuvB forms 2 homohexamers on either side of HJ DNA bound by 1 or 2 RuvA tetramers; 4 subunits per hexamer contact DNA at a time. Coordinated motions by a converter formed by DNA-disengaged RuvB subunits stimulates ATP hydrolysis and nucleotide exchange. Immobilization of the converter enables RuvB to convert the ATP-contained energy into a lever motion, pulling 2 nucleotides of DNA out of the RuvA tetramer per ATP hydrolyzed, thus driving DNA branch migration. The RuvB motors rotate together with the DNA substrate, which together with the progressing nucleotide cycle form the mechanistic basis for DNA recombination by continuous HJ branch migration. Branch migration allows RuvC to scan DNA until it finds its consensus sequence, where it cleaves and resolves cruciform DNA. The sequence is that of Holliday junction branch migration complex subunit RuvB from Prochlorococcus marinus (strain MIT 9303).